The primary structure comprises 383 residues: Chorismate synthase (383 aa).

Positions 39 and 45 each coordinate NADP(+). FMN-binding positions include 128-130 (RAS), Gly291, 306-310 (KPIAT), and Arg332.

It belongs to the chorismate synthase family. Homotetramer. FMNH2 is required as a cofactor.

The enzyme catalyses 5-O-(1-carboxyvinyl)-3-phosphoshikimate = chorismate + phosphate. It functions in the pathway metabolic intermediate biosynthesis; chorismate biosynthesis; chorismate from D-erythrose 4-phosphate and phosphoenolpyruvate: step 7/7. Catalyzes the anti-1,4-elimination of the C-3 phosphate and the C-6 proR hydrogen from 5-enolpyruvylshikimate-3-phosphate (EPSP) to yield chorismate, which is the branch point compound that serves as the starting substrate for the three terminal pathways of aromatic amino acid biosynthesis. This reaction introduces a second double bond into the aromatic ring system. This is Chorismate synthase from Thermus thermophilus (strain ATCC BAA-163 / DSM 7039 / HB27).